The primary structure comprises 312 residues: Ribosomal protein uL3 glutamine methyltransferase (312 aa).

The protein belongs to the protein N5-glutamine methyltransferase family. PrmB subfamily.

It catalyses the reaction L-glutaminyl-[ribosomal protein uL3] + S-adenosyl-L-methionine = N(5)-methyl-L-glutaminyl-[ribosomal protein uL3] + S-adenosyl-L-homocysteine + H(+). Functionally, methylates large ribosomal subunit protein uL3 on a specific glutamine residue. This Xylella fastidiosa (strain 9a5c) protein is Ribosomal protein uL3 glutamine methyltransferase.